The following is a 641-amino-acid chain: 1-deoxy-D-xylulose-5-phosphate synthase (641 aa).

Thiamine diphosphate is bound by residues His-79 and 120–122 (AHS). Asp-151 provides a ligand contact to Mg(2+). Thiamine diphosphate is bound by residues 152–153 (GA), Asn-180, Tyr-290, and Glu-372. Asn-180 serves as a coordination point for Mg(2+).

The protein belongs to the transketolase family. DXPS subfamily. Homodimer. Mg(2+) is required as a cofactor. The cofactor is thiamine diphosphate.

The catalysed reaction is D-glyceraldehyde 3-phosphate + pyruvate + H(+) = 1-deoxy-D-xylulose 5-phosphate + CO2. Its pathway is metabolic intermediate biosynthesis; 1-deoxy-D-xylulose 5-phosphate biosynthesis; 1-deoxy-D-xylulose 5-phosphate from D-glyceraldehyde 3-phosphate and pyruvate: step 1/1. Functionally, catalyzes the acyloin condensation reaction between C atoms 2 and 3 of pyruvate and glyceraldehyde 3-phosphate to yield 1-deoxy-D-xylulose-5-phosphate (DXP). This Bradyrhizobium sp. (strain BTAi1 / ATCC BAA-1182) protein is 1-deoxy-D-xylulose-5-phosphate synthase.